The following is a 156-amino-acid chain: Small ribosomal subunit protein uS11 (156 aa).

Residues M1 to K27 form a disordered region.

This sequence belongs to the universal ribosomal protein uS11 family. In terms of assembly, part of the 30S ribosomal subunit.

Functionally, located on the platform of the 30S subunit. This Thermofilum pendens (strain DSM 2475 / Hrk 5) protein is Small ribosomal subunit protein uS11.